We begin with the raw amino-acid sequence, 261 residues long: Class II histocompatibility antigen, M beta 1 chain (261 aa).

An N-terminal signal peptide occupies residues 1–18; it reads MAALWLLLLVLSLHCMGA. The segment at 19-112 is beta-1; that stretch reads GGFVAHVEST…PFWNALTHRT (94 aa). Residues 19–218 are Lumenal-facing; sequence GGFVAHVEST…PGLSPIQTVK (200 aa). Disulfide bonds link Cys-29/Cys-97, Cys-43/Cys-53, and Cys-135/Cys-192. N-linked (GlcNAc...) asparagine glycosylation occurs at Asn-75. Residues 113–207 are beta-2; it reads RPPSVRVAQT…GTSEPIRGDW (95 aa). Residues 114 to 204 form the Ig-like C1-type domain; sequence PPSVRVAQTT…QHSGTSEPIR (91 aa). Residues 208–218 are connecting peptide; the sequence is TPGLSPIQTVK. A helical membrane pass occupies residues 219–239; sequence VSVSAATLGLGFIIFCVGFFR. At 240-261 the chain is on the cytoplasmic side; sequence WRKSHSSSYTPLSGSTYPEGRH. The short motif at 248 to 251 is the YXXZ motif element; the sequence is YTPL.

It belongs to the MHC class II family. In terms of assembly, heterodimer of an alpha chain (DMA) and a beta chain (DMB). Interacts with MHCII; this interaction mediates rapid selection of high-affinity peptides.

It is found in the late endosome membrane. The protein localises to the lysosome membrane. In terms of biological role, plays a critical role in catalyzing the release of class II-associated invariant chain peptide (CLIP) from newly synthesized MHC class II molecules and freeing the peptide binding site for acquisition of antigenic peptides. The chain is Class II histocompatibility antigen, M beta 1 chain (H2-DMb1) from Mus musculus (Mouse).